Reading from the N-terminus, the 387-residue chain is MNSTDVTKGFTEQFGKQAEHTFFAPGRINLIGEHTDYNGGHVFPCAISLGTYAAVGTNEDNAFRLYSANFQRLALLTSIFGSFQDKRGLWTDYFQGMARVMKTAGANFTHGLNVYINGNLPDGAGLSSSASLEMLVGTILNSLFDGGFEPLELVQFGVKVENDYIGVNSGVMDQFAIEMGRANQATLLDTNTMKYEYLPVEMGDNVIVIMNTNKRRELADSKYNERRSECEKALAMLQKGIEVKSLGQLSEDEFDENTYLIYDPILIKRARHAVFENQRTLKASKALQDGDLKTFGKLVSASGVSLAFDYEVTGIELDTLVTNALKQRGVLGARMTGAGFGGCAIAIVNSADVEDFIDNVGKTYREKIGYDAHFYVADIADGAKQLN.

Substrate is bound at residue Glu33–Asp36. Residues Ser67 and Gly123 to Ser129 each bind ATP. Mg(2+) contacts are provided by Ser129 and Glu161. Residue Asp173 is the Proton acceptor of the active site. Residue Tyr223 participates in substrate binding.

Belongs to the GHMP kinase family. GalK subfamily.

The protein resides in the cytoplasm. It catalyses the reaction alpha-D-galactose + ATP = alpha-D-galactose 1-phosphate + ADP + H(+). It functions in the pathway carbohydrate metabolism; galactose metabolism. Catalyzes the transfer of the gamma-phosphate of ATP to D-galactose to form alpha-D-galactose-1-phosphate (Gal-1-P). The chain is Galactokinase from Lacticaseibacillus casei (Lactobacillus casei).